The sequence spans 38 residues: Photosystem II reaction center protein X (38 aa).

A helical membrane pass occupies residues 8–28 (FLWSLVAGAVVLGALFGAIIF).

It belongs to the PsbX family. Type 1 subfamily. PSII is composed of 1 copy each of membrane proteins PsbA, PsbB, PsbC, PsbD, PsbE, PsbF, PsbH, PsbI, PsbJ, PsbK, PsbL, PsbM, PsbT, PsbX, PsbY, PsbZ, Psb30/Ycf12, peripheral proteins PsbO, CyanoQ (PsbQ), PsbU, PsbV and a large number of cofactors. It forms dimeric complexes.

It localises to the cellular thylakoid membrane. Its function is as follows. Involved in the binding and/or turnover of quinones at the Q(B) site of photosystem II (PSII). PSII is a light-driven water plastoquinone oxidoreductase, using light energy to abstract electrons from H(2)O, generating a proton gradient subsequently used for ATP formation. The chain is Photosystem II reaction center protein X from Synechococcus sp. (strain JA-2-3B'a(2-13)) (Cyanobacteria bacterium Yellowstone B-Prime).